The sequence spans 406 residues: Argininosuccinate synthase (406 aa).

ATP contacts are provided by residues 14–22 (AYSGGLDTS) and alanine 41. L-citrulline contacts are provided by tyrosine 92 and serine 97. Residue glycine 122 coordinates ATP. Positions 124, 128, and 129 each coordinate L-aspartate. L-citrulline is bound at residue asparagine 128. L-citrulline is bound by residues arginine 132, serine 181, serine 190, glutamate 266, and tyrosine 278.

This sequence belongs to the argininosuccinate synthase family. Type 1 subfamily. In terms of assembly, homotetramer.

The protein localises to the cytoplasm. It catalyses the reaction L-citrulline + L-aspartate + ATP = 2-(N(omega)-L-arginino)succinate + AMP + diphosphate + H(+). Its pathway is amino-acid biosynthesis; L-arginine biosynthesis; L-arginine from L-ornithine and carbamoyl phosphate: step 2/3. This chain is Argininosuccinate synthase, found in Geobacter sulfurreducens (strain ATCC 51573 / DSM 12127 / PCA).